The following is a 158-amino-acid chain: Inorganic pyrophosphatase (158 aa).

Position 8 (glutamate 8) interacts with Mg(2+). Substrate contacts are provided by lysine 16, arginine 30, and tyrosine 42. Mg(2+) is bound by residues aspartate 52, aspartate 57, aspartate 84, and aspartate 89. The active-site Proton acceptor is the aspartate 89. Tyrosine 125 contributes to the substrate binding site.

It belongs to the PPase family. Homohexamer. The cofactor is Mg(2+).

It localises to the cytoplasm. It carries out the reaction diphosphate + H2O = 2 phosphate + H(+). In terms of biological role, catalyzes the hydrolysis of inorganic pyrophosphate (PPi) forming two phosphate ions. This is Inorganic pyrophosphatase from Corynebacterium glutamicum (strain ATCC 13032 / DSM 20300 / JCM 1318 / BCRC 11384 / CCUG 27702 / LMG 3730 / NBRC 12168 / NCIMB 10025 / NRRL B-2784 / 534).